Reading from the N-terminus, the 178-residue chain is Large ribosomal subunit protein bL25 (178 aa).

Belongs to the bacterial ribosomal protein bL25 family. CTC subfamily. In terms of assembly, part of the 50S ribosomal subunit; part of the 5S rRNA/L5/L18/L25 subcomplex. Contacts the 5S rRNA. Binds to the 5S rRNA independently of L5 and L18.

Functionally, this is one of the proteins that binds to the 5S RNA in the ribosome where it forms part of the central protuberance. This chain is Large ribosomal subunit protein bL25, found in Helicobacter pylori (strain P12).